Here is an 897-residue protein sequence, read N- to C-terminus: Alanine--tRNA ligase (897 aa).

4 residues coordinate Zn(2+): H581, H585, C684, and H688.

Belongs to the class-II aminoacyl-tRNA synthetase family. Zn(2+) is required as a cofactor.

It localises to the cytoplasm. The catalysed reaction is tRNA(Ala) + L-alanine + ATP = L-alanyl-tRNA(Ala) + AMP + diphosphate. Catalyzes the attachment of alanine to tRNA(Ala) in a two-step reaction: alanine is first activated by ATP to form Ala-AMP and then transferred to the acceptor end of tRNA(Ala). Also edits incorrectly charged Ser-tRNA(Ala) and Gly-tRNA(Ala) via its editing domain. This is Alanine--tRNA ligase from Mycobacterium sp. (strain KMS).